A 255-amino-acid polypeptide reads, in one-letter code: 1-(5-phosphoribosyl)-5-[(5-phosphoribosylamino)methylideneamino] imidazole-4-carboxamide isomerase (255 aa).

The Proton acceptor role is filled by D8. D129 functions as the Proton donor in the catalytic mechanism.

Belongs to the HisA/HisF family.

The protein resides in the cytoplasm. It carries out the reaction 1-(5-phospho-beta-D-ribosyl)-5-[(5-phospho-beta-D-ribosylamino)methylideneamino]imidazole-4-carboxamide = 5-[(5-phospho-1-deoxy-D-ribulos-1-ylimino)methylamino]-1-(5-phospho-beta-D-ribosyl)imidazole-4-carboxamide. It participates in amino-acid biosynthesis; L-histidine biosynthesis; L-histidine from 5-phospho-alpha-D-ribose 1-diphosphate: step 4/9. This chain is 1-(5-phosphoribosyl)-5-[(5-phosphoribosylamino)methylideneamino] imidazole-4-carboxamide isomerase, found in Parasynechococcus marenigrum (strain WH8102).